We begin with the raw amino-acid sequence, 552 residues long: MKGCLATMDKELWIKRANDSLVKHFYEQQSDIEQREGFESKLTFGTAGIRGKFGLGEGRLNKFTIEKLALGLARYLNAQTNNPTIVIHYDIRHLSTEFAQIIANVLANHQIIVYLPDTYKTTPELSFAVRNLNTTAGIMITASHNPKDYNGIKVYSSDGAQLSTDASELVSRYIEEVGDPLQIDIPISKQNTSYIKPFPKSVTDDYMKHIQNMIGYIPKSDLQVVFTSLHGTSVPIVPELLKSLNFNQFNLVEAQCKPDPNFSSVQSANPEDHRAFDQAVELANKSHADLLISTDPDADRLGIAERDAHGHITYFNGNQIGALLLNYRIQQTSQLRHRLMIQSIVSSELTKSLARYNNVEYKEVLTGFKFIAQEIRQLDDHQNMIFAFEESYGFLSEPFVRDKDAVQIVPLIIKYASELKLYGKTLKDELEQIYQTVGRHEDTLFSHTLEGLEGKKKIESIMTHFRSNPPQEIQGLKVKAIEDYLTSEVYQLDKDTTSQIDSPKSNVIRVLFDEGFIALRPSGTEPKIKLYVSLKCPDFDDVAQKINAMIFS.

The active-site Phosphoserine intermediate is the Ser143. Mg(2+) contacts are provided by Ser143, Asp295, Asp297, and Asp299.

Belongs to the phosphohexose mutase family. Mg(2+) is required as a cofactor.

The catalysed reaction is alpha-D-glucose 1-phosphate = alpha-D-glucose 6-phosphate. The protein operates within glycolipid metabolism; diglucosyl-diacylglycerol biosynthesis. Its function is as follows. Catalyzes the interconversion between glucose-6-phosphate and alpha-glucose-1-phosphate. This is the first step in the biosynthesis of diglucosyl-diacylglycerol (Glc2-DAG), i.e. the predominant glycolipid found in the S.aureus membrane, which is also used as a membrane anchor for lipoteichoic acid (LTA). The chain is Phosphoglucomutase (pgcA) from Staphylococcus aureus (strain MRSA252).